The primary structure comprises 409 residues: Imidazolonepropionase (409 aa).

His78 and His80 together coordinate Fe(3+). Residues His78 and His80 each contribute to the Zn(2+) site. Arg87, Tyr150, and His183 together coordinate 4-imidazolone-5-propanoate. Tyr150 serves as a coordination point for N-formimidoyl-L-glutamate. Position 248 (His248) interacts with Fe(3+). His248 provides a ligand contact to Zn(2+). Gln251 is a 4-imidazolone-5-propanoate binding site. Residue Asp323 coordinates Fe(3+). A Zn(2+)-binding site is contributed by Asp323. N-formimidoyl-L-glutamate contacts are provided by Asn325 and Gly327. Thr328 lines the 4-imidazolone-5-propanoate pocket.

It belongs to the metallo-dependent hydrolases superfamily. HutI family. Zn(2+) is required as a cofactor. Fe(3+) serves as cofactor.

It localises to the cytoplasm. It catalyses the reaction 4-imidazolone-5-propanoate + H2O = N-formimidoyl-L-glutamate. The protein operates within amino-acid degradation; L-histidine degradation into L-glutamate; N-formimidoyl-L-glutamate from L-histidine: step 3/3. Functionally, catalyzes the hydrolytic cleavage of the carbon-nitrogen bond in imidazolone-5-propanoate to yield N-formimidoyl-L-glutamate. It is the third step in the universal histidine degradation pathway. This Mesorhizobium japonicum (strain LMG 29417 / CECT 9101 / MAFF 303099) (Mesorhizobium loti (strain MAFF 303099)) protein is Imidazolonepropionase.